The chain runs to 401 residues: Argininosuccinate synthase (401 aa).

ATP-binding positions include 7–15 (AYSGGLDTS) and Ala34. L-citrulline-binding residues include Tyr85 and Ser90. An ATP-binding site is contributed by Gly115. Thr117, Asn121, and Asp122 together coordinate L-aspartate. Residue Asn121 participates in L-citrulline binding. L-citrulline is bound by residues Arg125, Ser174, Ser183, Glu259, and Tyr271.

This sequence belongs to the argininosuccinate synthase family. Type 1 subfamily. In terms of assembly, homotetramer.

It is found in the cytoplasm. The enzyme catalyses L-citrulline + L-aspartate + ATP = 2-(N(omega)-L-arginino)succinate + AMP + diphosphate + H(+). It functions in the pathway amino-acid biosynthesis; L-arginine biosynthesis; L-arginine from L-ornithine and carbamoyl phosphate: step 2/3. This is Argininosuccinate synthase from Desulforamulus reducens (strain ATCC BAA-1160 / DSM 100696 / MI-1) (Desulfotomaculum reducens).